A 79-amino-acid chain; its full sequence is UPF0349 protein GTNG_2908 (79 aa).

This sequence belongs to the UPF0349 family.

The protein is UPF0349 protein GTNG_2908 of Geobacillus thermodenitrificans (strain NG80-2).